Here is an 807-residue protein sequence, read N- to C-terminus: Glycerol-3-phosphate acyltransferase (807 aa).

The short motif at 308 to 313 is the HXXXXD motif element; sequence CHRSHM.

Belongs to the GPAT/DAPAT family.

It is found in the cell inner membrane. The catalysed reaction is sn-glycerol 3-phosphate + an acyl-CoA = a 1-acyl-sn-glycero-3-phosphate + CoA. The protein operates within phospholipid metabolism; CDP-diacylglycerol biosynthesis; CDP-diacylglycerol from sn-glycerol 3-phosphate: step 1/3. The polypeptide is Glycerol-3-phosphate acyltransferase (Shewanella sp. (strain MR-7)).